A 337-amino-acid chain; its full sequence is B1 bradykinin receptor (337 aa).

Over Met-1–Gly-41 the chain is Extracellular. Residues Asn-13 and Asn-21 are each glycosylated (N-linked (GlcNAc...) asparagine). Residues Phe-42–Leu-62 form a helical membrane-spanning segment. Residues Leu-63–Glu-83 lie on the Cytoplasmic side of the membrane. Residues Ile-84–Ala-104 traverse the membrane as a helical segment. Topologically, residues Glu-105–Arg-121 are extracellular. A disulfide bond links Cys-120 and Cys-199. A helical transmembrane segment spans residues Val-122–Ser-142. At Gln-143–Ala-164 the chain is on the cytoplasmic side. A helical transmembrane segment spans residues Gln-165–Leu-185. The Extracellular portion of the chain corresponds to Arg-186–Asn-217. An N-linked (GlcNAc...) asparagine glycan is attached at Asn-195. The helical transmembrane segment at Val-218–Ser-238 threads the bilayer. Residues Leu-239 to Leu-261 are Cytoplasmic-facing. Residues Ile-262–Leu-282 form a helical membrane-spanning segment. Topologically, residues Asp-283–Gln-305 are extracellular. Residues Leu-306–Gly-326 form a helical membrane-spanning segment. At Arg-327–Leu-337 the chain is on the cytoplasmic side.

This sequence belongs to the G-protein coupled receptor 1 family. Bradykinin receptor subfamily. BDKRB1 sub-subfamily. In terms of tissue distribution, expressed in bladder, lung, duodenum, kidney, uterus, thymus, salivary gland, testis, prostate, macrophages, aorta, spleen and heart.

It localises to the cell membrane. This is a receptor for bradykinin. Could be a factor in chronic pain and inflammation. The protein is B1 bradykinin receptor (Bdkrb1) of Rattus norvegicus (Rat).